The primary structure comprises 280 residues: Thioesterase pynI (280 aa).

Over residues 136–145 (LADDSDDEDN) the composition is skewed to acidic residues. Residues 136-167 (LADDSDDEDNRSDASDASDDGSTMSDEEEEDD) form a disordered region.

The protein belongs to the AMT4 thioesterase family.

The protein operates within secondary metabolite biosynthesis. Its function is as follows. Thioesterase; part of the gene cluster that mediates the biosynthesis of pyranonigrins, a family of antioxidative compounds. The first step of pyranonigrins biosynthesis is performed by the hybrid PKS-NRPS synthetase that condenses 6 malonyl-CoA units to an acetyl starter unit, to form a 1,3,5-trioxotetradecane-6,8-dienyl-ACP. The enoyl reductase (ER) domain of pynA is likely to be functional during the first two rounds of polyketide chain extension, to generate the saturated C-C bonds of the alkyl side chain. PynA subsequently forms the amide bond between the acyl chain and L-serine. Although pynA has a terminal reductase domain, it appears to require the thioesterase pynI for the release of the straight-chain intermediate from pynA via the formation of a tetramic acid pyranonigrin J. The methyltransferase pynC then coverts pyranonigrin J to pyranonigrin I via N-methylation. The FAD-dependent monooxygenase pynG catalyzes an epoxidation-mediated cyclization to form the dihydro-gamma-pyrone moiety, followed by pynD-catalyzed oxidation of the alcohol to the ketone and enolization to yield the characteristic tetramic acid-fused gamma-pyrone core of pyranonigrin H. Pyranonigrin H is substrate of pynH for dehydration-mediated exo-methylene formation from the serine side chain to produce pyranonigrin E, before the oxidase pynE reduces the exo-methylene of pyranonigrin E into a pendant methyl to form pyranonigrin G. The FAD-linked oxidoreductase pynB performs the reverse reaction and converts pyranonigrin G back to pyranonigrin E. The chain is Thioesterase pynI from Aspergillus niger (strain ATCC MYA-4892 / CBS 513.88 / FGSC A1513).